The chain runs to 400 residues: Argininosuccinate synthase (400 aa).

Position 8–16 (8–16 (AYSGGLDTS)) interacts with ATP. Tyr85 provides a ligand contact to L-citrulline. Gly115 is an ATP binding site. L-aspartate is bound by residues Thr117, Asn121, and Asp122. An L-citrulline-binding site is contributed by Asn121. Residues Arg125, Ser173, Glu258, and Tyr270 each contribute to the L-citrulline site.

The protein belongs to the argininosuccinate synthase family. Type 1 subfamily. Homotetramer.

The protein localises to the cytoplasm. The enzyme catalyses L-citrulline + L-aspartate + ATP = 2-(N(omega)-L-arginino)succinate + AMP + diphosphate + H(+). The protein operates within amino-acid biosynthesis; L-arginine biosynthesis; L-arginine from L-ornithine and carbamoyl phosphate: step 2/3. The protein is Argininosuccinate synthase of Staphylococcus haemolyticus (strain JCSC1435).